The primary structure comprises 122 residues: UPF0102 protein CTC_01256 (122 aa).

It belongs to the UPF0102 family.

The chain is UPF0102 protein CTC_01256 from Clostridium tetani (strain Massachusetts / E88).